A 1151-amino-acid polypeptide reads, in one-letter code: Elicitor of plant defense protein 1 (1151 aa).

Disordered stretches follow at residues 22–130, 178–197, and 236–255; these read YQDP…TLGE, ERIR…RSIK, and NYNS…DMHP. The span at 39–49 shows a compositional bias: acidic residues; the sequence is IIEDGEPEDEW. A compositionally biased stretch (polar residues) spans 64 to 99; the sequence is QNSASRLSKMSLTERFSIQTLDDTDGNTKSNRSSAT. Positions 104 to 122 are enriched in low complexity; it reads NPPDFSNGNDDSNGNSQNP. Basic and acidic residues predominate over residues 178–187; it reads ERIRAEESDS. The uDENN domain occupies 242 to 500; that stretch reads PPPEPLNTDP…NLCTEAFNPL (259 aa). Positions 524-656 constitute a cDENN domain; the sequence is EIPGSRTIDI…ARRKLMSLLQ (133 aa). Residues 658–1019 form the dDENN domain; sequence AAPHKLRYGV…DREMQPANDA (362 aa). Polar residues-rich tracts occupy residues 695 to 711 and 744 to 760; these read STPK…SSSG and TSKS…SPVS. Residues 695–809 form a disordered region; the sequence is STPKSTLGKW…SSSFGVDKHP (115 aa). Residues 784-798 show a composition bias toward basic and acidic residues; sequence LREKRSGHFGEEKMR. The segment at 886 to 934 adopts a Phorbol-ester/DAG-type zinc-finger fold; the sequence is GHCFNYMPKDNTSMCTICNDLAEGDGVYRCTGCKIVSHGRCLGYCSLIC.

This sequence belongs to the EPD1 elicitor family.

Its subcellular location is the secreted. It is found in the host cell. In terms of biological role, acts as an elicitor that triggers cell death and defense responses in the host plants. The chain is Elicitor of plant defense protein 1 from Gibberella zeae (strain ATCC MYA-4620 / CBS 123657 / FGSC 9075 / NRRL 31084 / PH-1) (Wheat head blight fungus).